Consider the following 206-residue polypeptide: Holliday junction branch migration complex subunit RuvA (206 aa).

The domain I stretch occupies residues 1–64; it reads MIGKLKGTLD…EDMLRLYGFQ (64 aa). Positions 65–144 are domain II; the sequence is SALEREWFRL…AYAGAASGTI (80 aa). The interval 145-154 is flexible linker; the sequence is GLKQELGEGV. The domain III stretch occupies residues 154–206; that stretch reads VAPAPITDAVSALVNLGYSRDTAANAVAAALKTAGEDADASKLIRFGLKELAR.

The protein belongs to the RuvA family. In terms of assembly, homotetramer. Forms an RuvA(8)-RuvB(12)-Holliday junction (HJ) complex. HJ DNA is sandwiched between 2 RuvA tetramers; dsDNA enters through RuvA and exits via RuvB. An RuvB hexamer assembles on each DNA strand where it exits the tetramer. Each RuvB hexamer is contacted by two RuvA subunits (via domain III) on 2 adjacent RuvB subunits; this complex drives branch migration. In the full resolvosome a probable DNA-RuvA(4)-RuvB(12)-RuvC(2) complex forms which resolves the HJ.

It localises to the cytoplasm. The RuvA-RuvB-RuvC complex processes Holliday junction (HJ) DNA during genetic recombination and DNA repair, while the RuvA-RuvB complex plays an important role in the rescue of blocked DNA replication forks via replication fork reversal (RFR). RuvA specifically binds to HJ cruciform DNA, conferring on it an open structure. The RuvB hexamer acts as an ATP-dependent pump, pulling dsDNA into and through the RuvAB complex. HJ branch migration allows RuvC to scan DNA until it finds its consensus sequence, where it cleaves and resolves the cruciform DNA. The polypeptide is Holliday junction branch migration complex subunit RuvA (Mesorhizobium japonicum (strain LMG 29417 / CECT 9101 / MAFF 303099) (Mesorhizobium loti (strain MAFF 303099))).